The following is a 238-amino-acid chain: Endonuclease V (238 aa).

Positions 46 and 116 each coordinate Mg(2+).

The protein belongs to the endonuclease V family. It depends on Mg(2+) as a cofactor.

The protein resides in the cytoplasm. It carries out the reaction Endonucleolytic cleavage at apurinic or apyrimidinic sites to products with a 5'-phosphate.. In terms of biological role, DNA repair enzyme involved in the repair of deaminated bases. Selectively cleaves double-stranded DNA at the second phosphodiester bond 3' to a deoxyinosine leaving behind the intact lesion on the nicked DNA. The protein is Endonuclease V of Bacillus subtilis (strain 168).